Reading from the N-terminus, the 166-residue chain is NAD(P)H-quinone oxidoreductase subunit I, chloroplastic (166 aa).

2 consecutive 4Fe-4S ferredoxin-type domains span residues 55–84 (GRIHFEFDKCIACEVCVRVCPIDLPVVDWK) and 95–124 (LNYSIDFGICIFCGNCVEYCPTNCLSMTEE). Positions 64, 67, 70, 74, 104, 107, 110, and 114 each coordinate [4Fe-4S] cluster.

The protein belongs to the complex I 23 kDa subunit family. NDH is composed of at least 16 different subunits, 5 of which are encoded in the nucleus. Requires [4Fe-4S] cluster as cofactor.

The protein resides in the plastid. It is found in the chloroplast thylakoid membrane. It catalyses the reaction a plastoquinone + NADH + (n+1) H(+)(in) = a plastoquinol + NAD(+) + n H(+)(out). The enzyme catalyses a plastoquinone + NADPH + (n+1) H(+)(in) = a plastoquinol + NADP(+) + n H(+)(out). In terms of biological role, NDH shuttles electrons from NAD(P)H:plastoquinone, via FMN and iron-sulfur (Fe-S) centers, to quinones in the photosynthetic chain and possibly in a chloroplast respiratory chain. The immediate electron acceptor for the enzyme in this species is believed to be plastoquinone. Couples the redox reaction to proton translocation, and thus conserves the redox energy in a proton gradient. The polypeptide is NAD(P)H-quinone oxidoreductase subunit I, chloroplastic (Oxypappus scaber).